Reading from the N-terminus, the 272-residue chain is Tryptophan synthase alpha chain (272 aa).

Residues Glu53 and Asp64 each act as proton acceptor in the active site.

The protein belongs to the TrpA family. In terms of assembly, tetramer of two alpha and two beta chains.

The catalysed reaction is (1S,2R)-1-C-(indol-3-yl)glycerol 3-phosphate + L-serine = D-glyceraldehyde 3-phosphate + L-tryptophan + H2O. It participates in amino-acid biosynthesis; L-tryptophan biosynthesis; L-tryptophan from chorismate: step 5/5. Its function is as follows. The alpha subunit is responsible for the aldol cleavage of indoleglycerol phosphate to indole and glyceraldehyde 3-phosphate. The polypeptide is Tryptophan synthase alpha chain (Xanthomonas campestris pv. campestris (strain B100)).